The following is a 602-amino-acid chain: ATP-dependent DNA helicase II subunit 1 (602 aa).

Residues 268–483 (FQCPLILDEK…YDNMKKVTQS (216 aa)) enclose the Ku domain. Phosphoserine occurs at positions 370, 371, and 372.

The protein belongs to the ku70 family. In terms of assembly, heterodimer of YKU70/HDF1 and YKU80/HDF2. In terms of processing, sumoylated by MMS21.

The protein resides in the nucleus. Its subcellular location is the chromosome. It localises to the telomere. The enzyme catalyses ATP + H2O = ADP + phosphate + H(+). In terms of biological role, single-stranded DNA-dependent ATP-dependent helicase. Involved in non-homologous end joining (NHEJ) DNA double strand break repair. DNA-binding is sequence-independent but has a high affinity to nicks in double-stranded DNA and to the ends of duplex DNA. Binds to naturally occurring chromosomal ends, and therefore provides chromosomal end protection. Appears to have a role in recruitment of telomerase and CDC13 to the telomere and the subsequent telomere elongation. Required also for telomere recombination to repair telomeric ends in the absence of telomerase. KU70, of the KU70/KU80 heterodimer, binds to the stem loop of TLC1, the RNA component of telomerase. Involved in telomere maintenance. Interacts with telomeric repeats and subtelomeric sequences thereby controlling telomere length and protecting against subtelomeric rearrangement. Maintains telomeric chromatin, which is involved in silencing the expression of genes located at the telomere. Required for mating-type switching. This Saccharomyces cerevisiae (strain ATCC 204508 / S288c) (Baker's yeast) protein is ATP-dependent DNA helicase II subunit 1 (YKU70).